The primary structure comprises 488 residues: NAD-reducing hydrogenase HoxS subunit beta (488 aa).

Ni(2+) contacts are provided by C62, C65, C458, and C461.

Belongs to the [NiFe]/[NiFeSe] hydrogenase large subunit family. Tetramer of an alpha and a gamma subunits (flavin-containing dimer), and a delta and a nickel-containing beta subunits (hydrogenase dimer). FMN serves as cofactor. It depends on Ni(2+) as a cofactor.

The protein resides in the cytoplasm. It carries out the reaction H2 + NAD(+) = NADH + H(+). The sequence is that of NAD-reducing hydrogenase HoxS subunit beta (hoxH) from Cupriavidus necator (strain ATCC 17699 / DSM 428 / KCTC 22496 / NCIMB 10442 / H16 / Stanier 337) (Ralstonia eutropha).